Here is a 1077-residue protein sequence, read N- to C-terminus: Deoxyribonuclease CdiA (1077 aa).

The tract at residues 67–384 (IGTSRQKTTD…DRDNYDAKQS (318 aa)) is FHA-2. Positions 531-546 (QQNVDDLSRDTGNANG) are enriched in polar residues. Residues 531-555 (QQNVDDLSRDTGNANGSIGPIFDKE) are disordered. Residues 781–784 (VENN) carry the VENN CT cleavage motif motif. The interval 954-1077 (MPWEDYVGKT…GVKVTVTQVK (124 aa)) is DNase activity.

Interacts with cognate immunity protein CdiI-YPIII, which blocks its toxic DNase activity. Zn(2+) is required as a cofactor.

It is found in the target cell. It localises to the target cell cytoplasm. Functionally, toxic component of a toxin-immunity protein module, which functions as a cellular contact-dependent growth inhibition (CDI) system. CDI modules allow bacteria to communicate with and inhibit the growth of closely related neighboring bacteria in a contact-dependent fashion. The C-terminal 123 residues (954-1077) has DNase activity in the presence of Zn(2+), converting supercoiled DNA into open-circular form. Toxic activity is neutralized by coexpression of the cognate immunity protein CdiI-YPIII, but not by non-cognate immunity proteins from other toxin-immunity modules. Expression of the DNase domain as a chimera allows bacteria to attack other non-immune bacteria which become filamentous and have lost DNA staining. Its function is as follows. The CdiA protein is thought to be exported from the cell through the central lumen of CdiB, the other half of its two-partner system (TPS). The TPS domain probably remains associated with CdiB while the FHA-1 domain forms an extended filament with the receptor-binding domain (RBD) at its extremity; in the secretion arrested state the C-terminus of the RBD and YP domains form a hairpin-like structure as the FHA-2, PT and CT domains are periplasmic. The YP domain is probably responsible for this arrest at the point where it re-enters the host cell periplasm. Upon binding to a target cell outer membrane receptor a signal is transmitted to activate secretion. The filament elongates slightly, the rest of CdiA is secreted and the FHA-2 domain becomes stably associated with the target cell's outer membrane where it facilitates entry of the toxic CT domain into the target cell periplasm. From there the toxic CT domain is cleaved and gains access to the target cell cytoplasm via an inner membrane protein. The chain is Deoxyribonuclease CdiA from Yersinia pseudotuberculosis serotype O:3 (strain YPIII).